Consider the following 265-residue polypeptide: Putative hydro-lyase PST_2764 (265 aa).

The protein belongs to the D-glutamate cyclase family.

In Stutzerimonas stutzeri (strain A1501) (Pseudomonas stutzeri), this protein is Putative hydro-lyase PST_2764.